The chain runs to 1002 residues: MALPVAEGTADTPLSPARDDSGSTSSGMWAALYDYEARGEDELSLRRGQLVEVLSQDAAVSGDEGWWAGQVQRRLGIFPASYVAPCGPVPPPAPPPPRPCSPVHVDFERLELKELIGAGGFGQVYRATWQGQEVAVKAARRDPEQDAAAAAESVRREARLFAMLRHPNIIQLRGVCLRQPHLCLVLEFARGGALNRALAAAASDPRAPGPRRARRIPPQVLVNWAVQIARGMLYLHEEAVVPILHRDLKSSNILLLEKIEHDDICNKTLKITDFGLAREWHRTTRMSAAGTYAWMAPEVIRSSLFSKGSDIWSYGVLLWELLTGEVPYRGIDGLAVAYGVAVNKLTLPIPSTCPEPFAKLMKECWEQDPHIRPSFALILQQLTAIEEAVLTNMPQESFHSMQEDWKLEIQQMFSELRTKEKELRSREEELSRAALQQKSQELLLRRREQQLAEREIDVLERELNVLIFQLSQEAPHVKKRKGRFRRGRLRLKDGHRISLPSDFQHKITVQASPTLDKRRSSDSGLCSPPGSPLMLPRLRAIQLTSDENNKTRGRNMVFRQEDFEDVKRSFKKKGCTWGPSSVQTKERPEGRERVRPLSDGNSPWSSLLIKSQKTTPLASLFVDQPGSCEEQKLVPEGLEHRKPKQTKFPGQAHVGLPLCKDSQREDSSEAESREEGSPKGSPVNNVGAPMLRKKTESALCECGMLLASMALGLDVRKLHGAQAPAKPSPKMEKKEEGALQPASRCQSSPSSLLRQPSAGRAPSGGSTLLLPSAPSHSSKSSLSMKCLLQAGKEESSLGNARDLCGPTTLTPDPGSAAPESGCELIPGLRPKTDYGVLRSMPHAILEQTGERLPGCAIVGDKGCHHMQMGSEETPLWLQSAPEDSGLPHSPSPGPQRDLASQASLVKPEGVLGECQACPALPQRPHTASVRTTSPPTWVCDKDHQVPALACLLGAQERSRCQTPSLLDASIEGQKKDCAMPLCRVKSVMCQPSIYALEKDFLT.

The disordered stretch occupies residues 1 to 26 (MALPVAEGTADTPLSPARDDSGSTSS). The SH3 domain maps to 24–88 (TSSGMWAALY…PASYVAPCGP (65 aa)). The region spanning 110 to 390 (LELKELIGAG…QLTAIEEAVL (281 aa)) is the Protein kinase domain. Residues 116–124 (IGAGGFGQV) and K137 each bind ATP. The Proton acceptor role is filled by D247. T283 carries the phosphothreonine; by autocatalysis modification. S287 is modified (phosphoserine; by autocatalysis and MAP4K1). Leucine-zipper regions lie at residues 409–430 (IQQMFSELRTKEKELRSREEEL) and 444–466 (LRRREQQLAEREIDVLERELNVL). 6 disordered regions span residues 508–531 (TVQASPTLDKRRSSDSGLCSPPGS), 574–604 (GCTWGPSSVQTKERPEGRERVRPLSDGNSPW), 640–689 (HRKP…VGAP), 721–778 (AQAP…SHSS), 797–823 (LGNARDLCGPTTLTPDPGSAAPESGCE), and 878–899 (QSAPEDSGLPHSPSPGPQRDLA). S512, S527, and S531 each carry phosphoserine. A Phosphothreonine modification is found at T576. Residues 584-596 (TKERPEGRERVRP) are compositionally biased toward basic and acidic residues. Residue S598 is modified to Phosphoserine. Over residues 661 to 677 (DSQREDSSEAESREEGS) the composition is skewed to basic and acidic residues. Low complexity-rich tracts occupy residues 740–758 (QPASRCQSSPSSLLRQPSA) and 766–778 (STLLLPSAPSHSS).

This sequence belongs to the protein kinase superfamily. STE Ser/Thr protein kinase family. MAP kinase kinase kinase subfamily. As to quaternary structure, homodimer. Interacts with TLR4. Mg(2+) is required as a cofactor. Autophosphorylation on serine and threonine residues within the activation loop plays a role in enzyme activation.

The enzyme catalyses L-seryl-[protein] + ATP = O-phospho-L-seryl-[protein] + ADP + H(+). The catalysed reaction is L-threonyl-[protein] + ATP = O-phospho-L-threonyl-[protein] + ADP + H(+). Its activity is regulated as follows. Homodimerization via the leucine zipper domains is required for autophosphorylation and subsequent activation. Functionally, negative regulator of TLR4 signaling. Does not activate JNK1/MAPK8 pathway, p38/MAPK14, nor ERK2/MAPK1 pathways. In Mus musculus (Mouse), this protein is Mitogen-activated protein kinase kinase kinase 21 (Map3k21).